A 177-amino-acid polypeptide reads, in one-letter code: ADP-ribosylation factor-like protein 3 (177 aa).

The N-myristoyl glycine moiety is linked to residue G2. GTP is bound by residues 23–31, 125–128, and A159; these read GLDNAGKTT and NKQD.

The protein belongs to the small GTPase superfamily. Arf family.

The protein resides in the golgi apparatus membrane. It localises to the cytoplasm. Its subcellular location is the cytoskeleton. The protein localises to the spindle. It is found in the nucleus. The protein resides in the microtubule organizing center. Small GTP-binding protein which cycles between an inactive GDP-bound and an active GTP-bound form, and the rate of cycling is regulated by guanine nucleotide exchange factors (GEF) and GTPase-activating proteins (GAP). Required for normal cytokinesis and cilia signaling. Required for targeting proteins to the ciliary membrane by releasing myristoylated protein from unc119 cargo adapters into the cilium. The chain is ADP-ribosylation factor-like protein 3 from Chlamydomonas reinhardtii (Chlamydomonas smithii).